The following is a 141-amino-acid chain: Putative nickel-responsive regulator (141 aa).

His-80, His-91, His-93, and Cys-99 together coordinate Ni(2+).

The protein belongs to the transcriptional regulatory CopG/NikR family. In terms of assembly, homotetramer. Ni(2+) is required as a cofactor.

Functionally, transcriptional regulator. The protein is Putative nickel-responsive regulator of Methanocaldococcus jannaschii (strain ATCC 43067 / DSM 2661 / JAL-1 / JCM 10045 / NBRC 100440) (Methanococcus jannaschii).